The sequence spans 342 residues: Probable dual-specificity RNA methyltransferase RlmN (342 aa).

Glu-91 serves as the catalytic Proton acceptor. Residues 97 to 327 (YRYGNTVCLS…VTVRRELGDE (231 aa)) enclose the Radical SAM core domain. Cys-104 and Cys-332 are oxidised to a cystine. [4Fe-4S] cluster contacts are provided by Cys-111, Cys-115, and Cys-118. S-adenosyl-L-methionine-binding positions include 158 to 159 (GE), Ser-190, 213 to 215 (SLH), and Asn-289. Catalysis depends on Cys-332, which acts as the S-methylcysteine intermediate.

This sequence belongs to the radical SAM superfamily. RlmN family. The cofactor is [4Fe-4S] cluster.

The protein localises to the cytoplasm. It catalyses the reaction adenosine(2503) in 23S rRNA + 2 reduced [2Fe-2S]-[ferredoxin] + 2 S-adenosyl-L-methionine = 2-methyladenosine(2503) in 23S rRNA + 5'-deoxyadenosine + L-methionine + 2 oxidized [2Fe-2S]-[ferredoxin] + S-adenosyl-L-homocysteine. The enzyme catalyses adenosine(37) in tRNA + 2 reduced [2Fe-2S]-[ferredoxin] + 2 S-adenosyl-L-methionine = 2-methyladenosine(37) in tRNA + 5'-deoxyadenosine + L-methionine + 2 oxidized [2Fe-2S]-[ferredoxin] + S-adenosyl-L-homocysteine. In terms of biological role, specifically methylates position 2 of adenine 2503 in 23S rRNA and position 2 of adenine 37 in tRNAs. The protein is Probable dual-specificity RNA methyltransferase RlmN of Carboxydothermus hydrogenoformans (strain ATCC BAA-161 / DSM 6008 / Z-2901).